The primary structure comprises 530 residues: MFS transporter PfmaC (530 aa).

Residues 41-76 form a disordered region; that stretch reads TTAVSDGDNQSSTMSGKTAAGDATSPASGSGSGGWF. Residues 42-56 show a composition bias toward polar residues; it reads TAVSDGDNQSSTMSG. Residues 59-69 show a composition bias toward low complexity; sequence AAGDATSPASG. A run of 10 helical transmembrane segments spans residues 165-182, 195-215, 226-246, 261-281, 324-344, 369-389, 396-416, 422-442, 456-476, and 493-513; these read YWLP…LGMY, FFIG…LGCW, ALFV…QAAL, WLFI…LFCF, IFTS…SLTV, NIPT…GFVS, GPVC…FTAW, LLMA…LLAG, AFIL…FQQL, and PSAL…IPLL.

This sequence belongs to the major facilitator superfamily. Allantoate permease family.

The protein localises to the cell membrane. Functionally, MFS transporter; part of the gene cluster that mediates the biosynthesis of dihydroxynaphthalene (DHN)-melanin, a bluish-green pigment forming a dark layer in the conidial wall that protects the conidia from UV radiations. The polypeptide is MFS transporter PfmaC (Pestalotiopsis fici (strain W106-1 / CGMCC3.15140)).